The sequence spans 510 residues: Serine/threonine protein phosphatase 2A 59 kDa regulatory subunit B' eta isoform (510 aa).

Positions 1 to 87 (MWKQILSKLP…NNNNNNNNGV (87 aa)) are disordered. The segment covering 10–19 (PNKKSSKHEH) has biased composition (basic residues). Positions 27–42 (HSSSSSHTSGASTSKS) are enriched in low complexity.

It belongs to the phosphatase 2A regulatory subunit B56 family. In terms of assembly, PP2A consists of a common heteromeric enzyme, composed of a catalytic subunit (subunits C), a constant regulatory subunit (subunit A), and a variety of regulatory subunits such as subunits B (the R2/B/PR55/B55, R3/B''/PR72/PR130/PR59 and R5/B'/B56 families). Interacts with BZR1. Interacts with BRI1.

It is found in the nucleus. Its subcellular location is the nucleolus. The protein localises to the cytoplasm. Its function is as follows. The B regulatory subunit may modulate substrate selectivity and catalytic activity, and may also direct the localization of the catalytic enzyme to a particular subcellular compartment. The holoenzyme composed of PP2AA1, PP2A4 and B'ETA acts as negative regulator of plant innate immunity by controlling BAK1 phosphorylation state and activation in surface-localized immune receptor complexes. Required for the formation of the PP2A holoenzyme that negatively regulates brassinosteroid signaling by dephosphorylating and inactivating BRI1 in the cytoplasm. This Arabidopsis thaliana (Mouse-ear cress) protein is Serine/threonine protein phosphatase 2A 59 kDa regulatory subunit B' eta isoform (B'ETA).